The following is a 350-amino-acid chain: Ornithine cyclodeaminase (350 aa).

Residues arginine 45 and lysine 69 each coordinate L-ornithine. NAD(+) contacts are provided by residues threonine 84, arginine 112, alanine 139–glutamine 140, aspartate 161, threonine 202, valine 225–aspartate 228, lysine 232, and serine 293. Arginine 112 contacts L-ornithine. Aspartate 228 serves as a coordination point for L-ornithine. Aspartate 228 serves as the catalytic Proton donor/acceptor. Valine 294 contacts L-ornithine. Lysine 331 provides a ligand contact to NAD(+).

The protein belongs to the ornithine cyclodeaminase/mu-crystallin family. Homodimer. The cofactor is NAD(+).

The enzyme catalyses L-ornithine = L-proline + NH4(+). It participates in amino-acid biosynthesis; L-proline biosynthesis; L-proline from L-ornithine: step 1/1. In terms of biological role, catalyzes the conversion of L-ornithine into L-proline with release of ammonia. Is likely involved in the L-ornithine degradation pathway that allows P.putida to utilize this compound as sole carbon and nitrogen source. This chain is Ornithine cyclodeaminase, found in Pseudomonas putida (strain ATCC 47054 / DSM 6125 / CFBP 8728 / NCIMB 11950 / KT2440).